The primary structure comprises 311 residues: MANPLYQKHIISINDLSRDDLNLVLATAAKLKANPQPELLKHKVIASCFFEASTRTRLSFETSMHRLGASVVGFSDSANTSLGKKGETLADTISVISTYVDAIVMRHPQEGAARLATEFSGQVPVLNAGDGSNQHPTQTLLDLFTIQETQGRLDNLHIAMVGDLKYGRTVHSLTQALAKFSGNRFYFIAPDALAMPQYILDMLDEKGMAWSPHGSIEEVMADVDILYMTRVQKERLDPSEYANVKAQFVLRASDLNGARENMKVLHPLPRIDEITTDVDKTPHAWYFQQAGNGIFARQALLALVLNSELSL.

Residues R55 and T56 each coordinate carbamoyl phosphate. K85 lines the L-aspartate pocket. 3 residues coordinate carbamoyl phosphate: R106, H135, and Q138. R168 and R230 together coordinate L-aspartate. Residues L268 and P269 each coordinate carbamoyl phosphate.

Belongs to the aspartate/ornithine carbamoyltransferase superfamily. ATCase family. As to quaternary structure, heterododecamer (2C3:3R2) of six catalytic PyrB chains organized as two trimers (C3), and six regulatory PyrI chains organized as three dimers (R2).

The catalysed reaction is carbamoyl phosphate + L-aspartate = N-carbamoyl-L-aspartate + phosphate + H(+). Its pathway is pyrimidine metabolism; UMP biosynthesis via de novo pathway; (S)-dihydroorotate from bicarbonate: step 2/3. Its function is as follows. Catalyzes the condensation of carbamoyl phosphate and aspartate to form carbamoyl aspartate and inorganic phosphate, the committed step in the de novo pyrimidine nucleotide biosynthesis pathway. In Salmonella paratyphi C (strain RKS4594), this protein is Aspartate carbamoyltransferase catalytic subunit.